A 258-amino-acid polypeptide reads, in one-letter code: Probable phthiotriol/phenolphthiotriol dimycocerosates methyltransferase 2 (258 aa).

The protein belongs to the methyltransferase superfamily. Phthiotriol/phenolphthiotriol dimycocerosates methyltransferase family.

Functionally, catalyzes the methylation of the lipid moiety of the intermediate compounds phthiotriol and glycosylated phenolphthiotriol dimycoserosates to form phthiocerol dimycocerosates (DIM A) and glycosylated phenolphthiocerol dimycocerosates (PGL). The polypeptide is Probable phthiotriol/phenolphthiotriol dimycocerosates methyltransferase 2 (Mycobacterium ulcerans (strain Agy99)).